We begin with the raw amino-acid sequence, 190 residues long: Transcription factor bHLH162 (190 aa).

Residues 1 to 12 (MEPSHSNTGQSR) are compositionally biased toward polar residues. The interval 1–21 (MEPSHSNTGQSRSVDRKTVEK) is disordered. The 53-residue stretch at 11-63 (SRSVDRKTVEKNRRMQMKSLYSELISLLPHHSSTEPLTLPDQLDEAANYIKKL) folds into the bHLH domain.

This sequence belongs to the bHLH protein family.

The protein resides in the nucleus. This chain is Transcription factor bHLH162, found in Arabidopsis thaliana (Mouse-ear cress).